Here is a 197-residue protein sequence, read N- to C-terminus: MNSTQSPVYRTSVEQKRHAQEVAKRQRMGNQMPRLREMLREKYRKRIIETRNRCTDAQREIQLSELREILRLELSELEKDVELEELILEELLSDVNEWYALGEKNLETLYAEPDEQQKEVLCPVCQIKNLRHHKGAFICECGIRFEHSANMEQLQILLQQQIASHELQCTQALRFFIEPASGQLYDMCGSCDYFSSV.

Positions 1-20 are disordered; the sequence is MNSTQSPVYRTSVEQKRHAQ. Residues 122 to 191 form an RIP-type zinc finger; that stretch reads CPVCQIKNLR…GQLYDMCGSC (70 aa).

The polypeptide is RIP-like protein (Ripalpha) (Drosophila melanogaster (Fruit fly)).